The following is a 279-amino-acid chain: Energy-coupling factor transporter ATP-binding protein EcfA1 (279 aa).

Residues Val6–Gly240 form the ABC transporter domain. Gly40–Ser47 contacts ATP.

This sequence belongs to the ABC transporter superfamily. Energy-coupling factor EcfA family. As to quaternary structure, forms a stable energy-coupling factor (ECF) transporter complex composed of 2 membrane-embedded substrate-binding proteins (S component), 2 ATP-binding proteins (A component) and 2 transmembrane proteins (T component).

It is found in the cell membrane. Its function is as follows. ATP-binding (A) component of a common energy-coupling factor (ECF) ABC-transporter complex. Unlike classic ABC transporters this ECF transporter provides the energy necessary to transport a number of different substrates. The polypeptide is Energy-coupling factor transporter ATP-binding protein EcfA1 (Listeria monocytogenes serotype 4b (strain F2365)).